Consider the following 435-residue polypeptide: Trigger factor (435 aa).

In terms of domain architecture, PPIase FKBP-type spans 161–246 (GDKLTLDFTG…IHKTEGPILP (86 aa)).

The protein belongs to the FKBP-type PPIase family. Tig subfamily.

Its subcellular location is the cytoplasm. It catalyses the reaction [protein]-peptidylproline (omega=180) = [protein]-peptidylproline (omega=0). Functionally, involved in protein export. Acts as a chaperone by maintaining the newly synthesized protein in an open conformation. Functions as a peptidyl-prolyl cis-trans isomerase. The chain is Trigger factor from Colwellia psychrerythraea (strain 34H / ATCC BAA-681) (Vibrio psychroerythus).